The primary structure comprises 91 residues: Gem-associated protein 7 homolog (91 aa).

Positions 18–86 constitute a Sm domain; it reads LKFYQKMASA…VVGIEYNLVQ (69 aa).

The protein belongs to the gemin-7 family. As to quaternary structure, part of the core SMN complex at least composed of smn1, yip11/gem2, gem6, gem7 and gem8. Interacts with gem6; the interaction is direct. Interacts with gem8; the interaction is direct.

This is Gem-associated protein 7 homolog from Schizosaccharomyces pombe (strain 972 / ATCC 24843) (Fission yeast).